The sequence spans 521 residues: Bifunctional purine biosynthesis protein PurH (521 aa).

The MGS-like domain maps to 1-145 (MIKQALISVS…KNHRDVTVVV (145 aa)).

This sequence belongs to the PurH family.

It catalyses the reaction (6R)-10-formyltetrahydrofolate + 5-amino-1-(5-phospho-beta-D-ribosyl)imidazole-4-carboxamide = 5-formamido-1-(5-phospho-D-ribosyl)imidazole-4-carboxamide + (6S)-5,6,7,8-tetrahydrofolate. The enzyme catalyses IMP + H2O = 5-formamido-1-(5-phospho-D-ribosyl)imidazole-4-carboxamide. Its pathway is purine metabolism; IMP biosynthesis via de novo pathway; 5-formamido-1-(5-phospho-D-ribosyl)imidazole-4-carboxamide from 5-amino-1-(5-phospho-D-ribosyl)imidazole-4-carboxamide (10-formyl THF route): step 1/1. It participates in purine metabolism; IMP biosynthesis via de novo pathway; IMP from 5-formamido-1-(5-phospho-D-ribosyl)imidazole-4-carboxamide: step 1/1. The sequence is that of Bifunctional purine biosynthesis protein PurH from Burkholderia ambifaria (strain ATCC BAA-244 / DSM 16087 / CCUG 44356 / LMG 19182 / AMMD) (Burkholderia cepacia (strain AMMD)).